Reading from the N-terminus, the 134-residue chain is Histone-like protein Rv3852 (134 aa).

Basic and acidic residues predominate over residues Met-1–Ser-10. Positions Met-1 to Gln-68 are disordered. Positions Leu-23–Pro-48 are enriched in basic residues. A helical membrane pass occupies residues Pro-111–Ile-128.

In terms of assembly, homodimer in solution. Is probably able to self-associate in higher oligomers along the DNA molecules. Interacts with the N-terminal region of Wag31.

Its subcellular location is the cell inner membrane. Its activity is regulated as follows. Can interact directly in vitro with the compound agrimophol, a phloroglucinol from the A.pilosa plant, whose extracts have been used in traditional Chinese medicine to treat pulmonary infections. Interaction with agrimophol leads to disruption of Rv3852's DNA binding function. Binds DNA in vitro. It has been proposed that Rv3852 plays a role in nucleoid organization and may function as an anchorage to tether the DNA to the membrane. However, it was later shown that it has no influence on nucleoid shape or compaction. It plays no role in virulence and only a minor role in the control of transcription, and does not appear to function as a typical nucleoid-associated protein. Its function is as follows. Interacts with Wag31, an important cell shape and cell wall integrity determinant, and facilitates the localization of Wag31 to the cell poles and the cell wall, thus enabling nascent peptidoglycan synthesis. This chain is Histone-like protein Rv3852, found in Mycobacterium tuberculosis (strain ATCC 25618 / H37Rv).